Reading from the N-terminus, the 800-residue chain is Leukocyte receptor cluster member 8 homolog (800 aa).

Disordered regions lie at residues Asn118–Ser149, Pro175–Phe229, Ser245–Gln273, Thr335–Ser394, and Lys407–Gly519. Composition is skewed to low complexity over residues Gln120–Gly131 and Asn184–Ser201. A compositionally biased stretch (polar residues) spans Ser252 to Thr261. The segment covering Trp338–Ser352 has biased composition (basic and acidic residues). A compositionally biased stretch (polar residues) spans Gln360–Ala387. Low complexity predominate over residues Ser409–Arg418. 2 stretches are compositionally biased toward basic residues: residues Ser419 to Arg433 and Glu508 to Gly519. A PCI domain is found at Asp636–Ile800.

This is Leukocyte receptor cluster member 8 homolog (leng8) from Xenopus laevis (African clawed frog).